Reading from the N-terminus, the 129-residue chain is Replication initiation control protein YabA (129 aa).

Zn(2+) contacts are provided by His103, Cys105, Cys119, and Cys122.

Belongs to the YabA family. In terms of assembly, homotetramer. Interacts with both DnaA and DnaN, acting as a bridge between these two proteins. Zn(2+) is required as a cofactor.

The protein localises to the cytoplasm. Its subcellular location is the nucleoid. Its function is as follows. Involved in control of chromosome replication initiation. Inhibits the cooperative binding of DnaA to the oriC region, thus negatively regulating initiation of chromosome replication. Inhibits the ability of DnaA-ATP to form a helix on DNA; does not disassemble preformed DnaA-DNA helices. Decreases the residence time of DnaA on the chromosome at its binding sites (oriC, replication forks and promoter-binding sites). Tethers DnaA to the replication machinery via the DNA polymerase beta sliding clamp subunit (dnaN). Associates with oriC and other DnaA targets on the chromosome in a DnaA-dependent manner. In Listeria welshimeri serovar 6b (strain ATCC 35897 / DSM 20650 / CCUG 15529 / CIP 8149 / NCTC 11857 / SLCC 5334 / V8), this protein is Replication initiation control protein YabA.